The sequence spans 1135 residues: Vinculin (1135 aa).

Positions 2–835 (PVFHTRTIES…GAVAKVREAF (834 aa)) are N-terminal globular head. Phosphotyrosine is present on Y100. A talin-interaction region spans residues 168–208 (MTKMAKMIDERQQELTHQEHRVMLVNSMNTVKELLPVLISA). A run of 3 repeats spans residues 259-369 (ASKD…KVEN), 370-479 (AARK…KTNR), and 480-589 (AVAN…RMQE). Residues 259–589 (ASKDTEAMKR…LKDLKARMQE (331 aa)) are 3 X 112 AA tandem repeats. Phosphotyrosine occurs at positions 537 and 822. The tract at residues 836 to 878 (QPQEPDFPPPPPDLEHLHLTDELAPPKPPLPEGEVPPPRPPPP) is linker (Pro-rich). Residues 837–888 (PQEPDFPPPPPDLEHLHLTDELAPPKPPLPEGEVPPPRPPPPEEKDEEFPEQ) form a disordered region. The span at 860 to 876 (PPKPPLPEGEVPPPRPP) shows a compositional bias: pro residues. The segment at 879–1135 (EEKDEEFPEQ…RWVRKTPWYQ (257 aa)) is C-terminal tail. 2 facilitates phospholipid membrane insertion regions span residues 1004–1047 (RLVR…KRIR) and 1121–1135 (AGFT…PWYQ). Position 1134 is a phosphotyrosine; by SRC-type Tyr-kinases (Y1134).

Belongs to the vinculin/alpha-catenin family. In terms of assembly, exhibits self-association properties. Interacts with APBB1IP, NRAP and TLN1. Interacts with CTNNB1 and this interaction is necessary for its localization to the cell-cell junctions and for its function in regulating cell surface expression of E-cadherin. Post-translationally, phosphorylated; on serines, threonines and tyrosines. Phosphorylation on Tyr-1134 in activated platelets affects head-tail interactions and cell spreading but has no effect on actin binding nor on localization to focal adhesion plaques. In terms of processing, acetylated; mainly by myristic acid but also by a small amount of palmitic acid. As to expression, isoform Metavinculin is muscle-specific.

It is found in the cell membrane. The protein resides in the cell junction. It localises to the adherens junction. The protein localises to the focal adhesion. Its subcellular location is the cytoplasm. It is found in the cytoskeleton. The protein resides in the sarcolemma. It localises to the cell projection. The protein localises to the podosome. Its function is as follows. Actin filament (F-actin)-binding protein involved in cell-matrix adhesion and cell-cell adhesion. Regulates cell-surface E-cadherin expression and potentiates mechanosensing by the E-cadherin complex. May also play important roles in cell morphology and locomotion. The polypeptide is Vinculin (VCL) (Gallus gallus (Chicken)).